The following is a 114-amino-acid chain: Iron-sulfur cluster insertion protein ErpA (114 aa).

Cys42, Cys106, and Cys108 together coordinate iron-sulfur cluster.

It belongs to the HesB/IscA family. As to quaternary structure, homodimer. Iron-sulfur cluster serves as cofactor.

Required for insertion of 4Fe-4S clusters for at least IspG. This chain is Iron-sulfur cluster insertion protein ErpA, found in Edwardsiella ictaluri (strain 93-146).